A 129-amino-acid chain; its full sequence is D-ribose pyranase 1 (129 aa).

Histidine 20 functions as the Proton donor in the catalytic mechanism. Residues aspartate 28, histidine 96, and 118-120 (YSN) each bind substrate.

The protein belongs to the RbsD / FucU family. RbsD subfamily. In terms of assembly, homodecamer.

It is found in the cytoplasm. It carries out the reaction beta-D-ribopyranose = beta-D-ribofuranose. Its pathway is carbohydrate metabolism; D-ribose degradation; D-ribose 5-phosphate from beta-D-ribopyranose: step 1/2. In terms of biological role, catalyzes the interconversion of beta-pyran and beta-furan forms of D-ribose. The polypeptide is D-ribose pyranase 1 (Rubrobacter xylanophilus (strain DSM 9941 / JCM 11954 / NBRC 16129 / PRD-1)).